A 158-amino-acid polypeptide reads, in one-letter code: NAD(P)H-quinone oxidoreductase subunit J, chloroplastic (158 aa).

Belongs to the complex I 30 kDa subunit family. In terms of assembly, NDH is composed of at least 16 different subunits, 5 of which are encoded in the nucleus.

The protein resides in the plastid. It localises to the chloroplast thylakoid membrane. It catalyses the reaction a plastoquinone + NADH + (n+1) H(+)(in) = a plastoquinol + NAD(+) + n H(+)(out). The catalysed reaction is a plastoquinone + NADPH + (n+1) H(+)(in) = a plastoquinol + NADP(+) + n H(+)(out). NDH shuttles electrons from NAD(P)H:plastoquinone, via FMN and iron-sulfur (Fe-S) centers, to quinones in the photosynthetic chain and possibly in a chloroplast respiratory chain. The immediate electron acceptor for the enzyme in this species is believed to be plastoquinone. Couples the redox reaction to proton translocation, and thus conserves the redox energy in a proton gradient. The chain is NAD(P)H-quinone oxidoreductase subunit J, chloroplastic from Nuphar advena (Common spatterdock).